The following is a 467-amino-acid chain: MRGGSSDAERRQRWGRLFEELDSNKDGRVDVHELRQGLARLGRGDPDRAQQGVSSDWDADPDGGLSLEEFTRYLQEREQRLLLMFHSLDRNQDGHIDVSEIQQSFRALGISISLEQAEKILHSMDRDGTMTIDWQEWRDHFLLHSLENVEDVLYFWKHSTVLDIGECLTVPDEFSQEEKLTGMWWKQLVAGAVAGAVSRTGTAPLDRLKVFMQVHASKSNRLNILGGLRNMIQEGGVLSLWRGNGINVLKIAPESAIKFMAYEQIKRAIRGQQETLHVQERFVAGSLAGATAQTIIYPMEVLKTRLTLRRTGQYKGLLDCAKRILEREGPRAFYRGYLPNVLGIIPYAGIDLAVYETLKNRWLQQYSHESANPGILVLLGCGTISSTCGQIASYPLALVRTRMQAQASIEGGPQVSMVGLLRHILSQEGVWGLYRGIAPNFMKVIPAVSISYVVYENMKQALGVTSR.

Residues Met-1–Asn-148 form a regulatory N-terminal domain region. Topologically, residues Met-1–Gln-187 are mitochondrial intermembrane. 3 EF-hand domains span residues Glu-9–Gly-44, Glu-76–Ser-111, and Ile-112–Glu-147. Ca(2+)-binding residues include Asp-22, Asn-24, Asp-26, Arg-28, and Glu-33. The segment at Ala-39 to Pro-61 is disordered. The Ca(2+) site is built by Asp-89, Asn-91, Asp-93, His-95, and Glu-100. A linker region region spans residues Val-149–His-158. Residues Ile-164–Arg-467 are C-terminal transmembrane transporter domain. 3 Solcar repeats span residues Gly-182–Ala-268, Leu-276–Arg-361, and Pro-373–Ala-461. Residues Leu-188–Leu-205 traverse the membrane as a helical segment. The Mitochondrial matrix portion of the chain corresponds to Asp-206–Arg-242. A helical membrane pass occupies residues Gly-243–Tyr-262. The Mitochondrial intermembrane portion of the chain corresponds to Glu-263–Gly-285. Residues Ser-286–Met-299 form a helical membrane-spanning segment. Over Glu-300 to Arg-335 the chain is Mitochondrial matrix. Residues Gly-336–Tyr-355 traverse the membrane as a helical segment. Residues Glu-356–Leu-378 are Mitochondrial intermembrane-facing. Residues Leu-379–Leu-396 traverse the membrane as a helical segment. The Mitochondrial matrix portion of the chain corresponds to Ala-397–Arg-435. The helical transmembrane segment at Gly-436–Tyr-455 threads the bilayer. Residues Glu-456–Arg-467 are Mitochondrial intermembrane-facing.

This sequence belongs to the mitochondrial carrier (TC 2.A.29) family. In terms of assembly, interacts with MCU. Interacts with MICU1.

Its subcellular location is the mitochondrion inner membrane. The enzyme catalyses Mg(2+)(out) + phosphate(in) + ATP(out) = Mg(2+)(in) + phosphate(out) + ATP(in). It carries out the reaction ADP(out) + phosphate(in) + H(+)(out) = ADP(in) + phosphate(out) + H(+)(in). It catalyses the reaction AMP(out) + phosphate(in) = AMP(in) + phosphate(out). The catalysed reaction is phosphate(in) + ATP(out) + 2 H(+)(out) = phosphate(out) + ATP(in) + 2 H(+)(in). The enzyme catalyses dADP(in) + ADP(out) = dADP(out) + ADP(in). It carries out the reaction Mg(2+)(in) + ADP(out) + ATP(in) + H(+)(out) = Mg(2+)(out) + ADP(in) + ATP(out) + H(+)(in). It catalyses the reaction ADP(out) + diphosphate(in) = ADP(in) + diphosphate(out). The catalysed reaction is dAMP(in) + ADP(out) + H(+)(out) = dAMP(out) + ADP(in) + H(+)(in). The enzyme catalyses 3'-AMP(in) + ADP(out) + H(+)(out) = 3'-AMP(out) + ADP(in) + H(+)(in). It carries out the reaction dAMP(out) + phosphate(in) = dAMP(in) + phosphate(out). It catalyses the reaction 3'-AMP(out) + phosphate(in) = 3'-AMP(in) + phosphate(out). The catalysed reaction is dADP(out) + phosphate(in) + H(+)(out) = dADP(in) + phosphate(out) + H(+)(in). Activated by an increase in cytosolic calcium levels that induce a conformational change of the N-terminal regulatory domain, uncapping the channel and allowing transport. Functionally, electroneutral antiporter that mediates the transport of adenine nucleotides through the inner mitochondrial membrane. Originally identified as an ATP-magnesium/inorganic phosphate antiporter, it also acts as a broad specificity adenyl nucleotide antiporter. By regulating the mitochondrial matrix adenine nucleotide pool could adapt to changing cellular energetic demands and indirectly regulate adenine nucleotide-dependent metabolic pathways. Also acts as a regulator of mitochondrial calcium uptake and can probably transport trace amounts of other divalent metal cations in complex with ATP. In vitro, a low activity is also observed with guanyl and pyrimidine nucleotides. This Mus musculus (Mouse) protein is Mitochondrial adenyl nucleotide antiporter SLC25A23.